A 462-amino-acid polypeptide reads, in one-letter code: UDP-N-acetylmuramate--L-alanine ligase (462 aa).

An ATP-binding site is contributed by 116–122 (GAHGKTT).

This sequence belongs to the MurCDEF family.

The protein resides in the cytoplasm. The enzyme catalyses UDP-N-acetyl-alpha-D-muramate + L-alanine + ATP = UDP-N-acetyl-alpha-D-muramoyl-L-alanine + ADP + phosphate + H(+). The protein operates within cell wall biogenesis; peptidoglycan biosynthesis. Its function is as follows. Cell wall formation. This Desulforamulus reducens (strain ATCC BAA-1160 / DSM 100696 / MI-1) (Desulfotomaculum reducens) protein is UDP-N-acetylmuramate--L-alanine ligase.